The following is a 773-amino-acid chain: Ergothioneine biosynthesis protein 1 (773 aa).

The interval 16 to 322 is L-histidine N(alpha)-methyltransferase; that stretch reads PESIEQSLKR…ESTIADYSTY (307 aa). Y51 provides a ligand contact to L-histidine. S-adenosyl-L-methionine contacts are provided by residues G85, K91, D112, and 142 to 143; that span reads CF. Residues N172, Y212, and 287–289 each bind L-histidine; that span reads EES. The hercynylcysteine S-oxide synthase stretch occupies residues 347 to 772; sequence ALRKVWLFIT…YAWIGARLVK (426 aa). Fe cation is bound by residues H382, H476, and H480.

This sequence in the N-terminal section; belongs to the methyltransferase superfamily. EgtD family. The protein in the C-terminal section; belongs to the EgtB family. It depends on Fe(2+) as a cofactor.

It localises to the cytoplasm. The protein resides in the nucleus. The enzyme catalyses L-histidine + 3 S-adenosyl-L-methionine = hercynine + 3 S-adenosyl-L-homocysteine + 3 H(+). The catalysed reaction is hercynine + L-cysteine + O2 = S-(hercyn-2-yl)-L-cysteine S-oxide + H2O. Its pathway is amino-acid biosynthesis; ergothioneine biosynthesis. Catalyzes the SAM-dependent triple methylation of the alpha-amino group of histidine to form hercynine and subsequent conjugation with cysteine and oxygen to form hercynylcysteine sulfoxide, the first two steps in the biosynthesis pathway of ergothioneine. May play a role in meiosis. This chain is Ergothioneine biosynthesis protein 1, found in Schizosaccharomyces pombe (strain 972 / ATCC 24843) (Fission yeast).